Here is a 1128-residue protein sequence, read N- to C-terminus: GTPase-activating protein BEM3 (1128 aa).

The tract at residues 194–241 (SSPTKIHSEQLASPAASVTYTTSRITIKSPNKGSKSPLQERLRSPQNP) is disordered. A compositionally biased stretch (polar residues) spans 209–230 (ASVTYTTSRITIKSPNKGSKSP). Residue serine 254 is modified to Phosphoserine. Disordered stretches follow at residues 345 to 391 (EDLV…TPLS) and 418 to 486 (PVLT…RPHA). A compositionally biased stretch (pro residues) spans 366-375 (LPPPPAPPTF). 2 stretches are compositionally biased toward polar residues: residues 382–391 (GNIKNSTPLS) and 420–478 (LTSS…QGSL). A PH domain is found at 634-741 (DNVKDGSLLL…WLSAFSDYID (108 aa)). Disordered regions lie at residues 746–777 (LSLS…NATI) and 796–838 (NNNI…DSRR). The span at 752-764 (RNANDTDSASHLS) shows a compositional bias: polar residues. Low complexity predominate over residues 796–815 (NNNISNSSNNIANSDGIDSN). The segment covering 816-829 (PSSHSNFLASSSGN) has biased composition (polar residues). Positions 913–1128 (LRLSSHKYQN…EKVDIHIPQV (216 aa)) constitute a Rho-GAP domain.

It localises to the cytoplasm. Its function is as follows. GTPase-activating protein (GAP) for CDC42 and less efficiently for RHO1. Negative regulator of the pheromone-response pathway through the STE20 protein kinase. The sequence is that of GTPase-activating protein BEM3 (BEM3) from Saccharomyces cerevisiae (strain ATCC 204508 / S288c) (Baker's yeast).